A 322-amino-acid chain; its full sequence is Glucokinase (322 aa).

An ATP-binding site is contributed by Gly10–Thr15.

Belongs to the bacterial glucokinase family.

The protein resides in the cytoplasm. The catalysed reaction is D-glucose + ATP = D-glucose 6-phosphate + ADP + H(+). The protein is Glucokinase of Hahella chejuensis (strain KCTC 2396).